Reading from the N-terminus, the 98-residue chain is NADH-ubiquinone oxidoreductase chain 4L (98 aa).

3 helical membrane-spanning segments follow: residues 1–21, 29–49, and 61–81; these read MSITTLNIMVAFMMALLGMFV, SLLCLEGMMLSLFMLATIVSL, and VILLVFAACEAAVGLALLIMV.

The protein belongs to the complex I subunit 4L family. Core subunit of respiratory chain NADH dehydrogenase (Complex I) which is composed of 45 different subunits.

The protein resides in the mitochondrion inner membrane. The catalysed reaction is a ubiquinone + NADH + 5 H(+)(in) = a ubiquinol + NAD(+) + 4 H(+)(out). In terms of biological role, core subunit of the mitochondrial membrane respiratory chain NADH dehydrogenase (Complex I) which catalyzes electron transfer from NADH through the respiratory chain, using ubiquinone as an electron acceptor. Part of the enzyme membrane arm which is embedded in the lipid bilayer and involved in proton translocation. This is NADH-ubiquinone oxidoreductase chain 4L (MT-ND4L) from Ochotona princeps (Southern American pika).